The chain runs to 89 residues: Large ribosomal subunit protein eL34 (89 aa).

This sequence belongs to the eukaryotic ribosomal protein eL34 family.

In Methanococcus maripaludis (strain C6 / ATCC BAA-1332), this protein is Large ribosomal subunit protein eL34.